We begin with the raw amino-acid sequence, 214 residues long: GTP-binding nuclear protein GSP1/Ran (214 aa).

Positions 4 to 168 constitute a Small GTPase Ran-type domain; the sequence is EVAAFKLVLV…LWLARKLAGN (165 aa). 15–22 lines the GTP pocket; it reads DGGTGKTT. A switch-I region spans residues 34-42; it reads NRYNATLGV. Residues Gly-65, 119–122, and 147–149 contribute to the GTP site; these read NKVD and SAK. A switch-II region spans residues 65–81; that stretch reads GQEKFGGLRDGYYINGQ.

This sequence belongs to the small GTPase superfamily. Ran family. As to quaternary structure, found in a nuclear export complex with RanGTP, exportin and pre-miRNA.

It localises to the nucleus. Its function is as follows. GTP-binding protein involved in nucleocytoplasmic transport. Required for the import of protein into the nucleus and also for RNA export. Involved in chromatin condensation and control of cell cycle. The sequence is that of GTP-binding nuclear protein GSP1/Ran (GSP1) from Yarrowia lipolytica (strain CLIB 122 / E 150) (Yeast).